Reading from the N-terminus, the 284-residue chain is 3-methyl-2-oxobutanoate hydroxymethyltransferase 2 (284 aa).

Residues D49 and D88 each contribute to the Mg(2+) site. 3-methyl-2-oxobutanoate-binding positions include 49 to 50, D88, and K118; that span reads DS. Residue E120 coordinates Mg(2+). The active-site Proton acceptor is the E187.

Belongs to the PanB family. In terms of assembly, homodecamer; pentamer of dimers. The cofactor is Mg(2+).

The protein resides in the cytoplasm. The catalysed reaction is 3-methyl-2-oxobutanoate + (6R)-5,10-methylene-5,6,7,8-tetrahydrofolate + H2O = 2-dehydropantoate + (6S)-5,6,7,8-tetrahydrofolate. It participates in cofactor biosynthesis; (R)-pantothenate biosynthesis; (R)-pantoate from 3-methyl-2-oxobutanoate: step 1/2. Catalyzes the reversible reaction in which hydroxymethyl group from 5,10-methylenetetrahydrofolate is transferred onto alpha-ketoisovalerate to form ketopantoate. The chain is 3-methyl-2-oxobutanoate hydroxymethyltransferase 2 from Burkholderia cenocepacia (strain HI2424).